Here is a 407-residue protein sequence, read N- to C-terminus: tRNA(Ile)-lysidine synthase (407 aa).

36–41 contributes to the ATP binding site; that stretch reads SGGRDS.

The protein belongs to the tRNA(Ile)-lysidine synthase family.

It is found in the cytoplasm. The enzyme catalyses cytidine(34) in tRNA(Ile2) + L-lysine + ATP = lysidine(34) in tRNA(Ile2) + AMP + diphosphate + H(+). Functionally, ligates lysine onto the cytidine present at position 34 of the AUA codon-specific tRNA(Ile) that contains the anticodon CAU, in an ATP-dependent manner. Cytidine is converted to lysidine, thus changing the amino acid specificity of the tRNA from methionine to isoleucine. In Tropheryma whipplei (strain TW08/27) (Whipple's bacillus), this protein is tRNA(Ile)-lysidine synthase.